The chain runs to 80 residues: Conotoxin Ca11.3 (80 aa).

Positions 1–19 (MKLVLAIVVILMLLSLSTG) are cleaved as a signal peptide. Positions 20 to 42 (AEMSDNHASRSATALRDRLLSPK) are excised as a propeptide. Cystine bridges form between Cys-46/Cys-60, Cys-53/Cys-65, Cys-59/Cys-72, and Cys-64/Cys-79.

It belongs to the conotoxin I3 superfamily. In terms of tissue distribution, expressed by the venom duct.

The protein resides in the secreted. The protein is Conotoxin Ca11.3 of Conus caracteristicus (Characteristic cone).